The following is a 120-amino-acid chain: MKHRKGRVEGEILRELTKIIRKNIRDPRVSNVTFTAVECSNDFSYATVYYSLLTEDEQAQKEAEAGLEKAKGTMRHLLGQSLTMYKVPELIFKRDQSVIYGSKIDRLLADLKKQEQDRQN.

The protein belongs to the RbfA family. As to quaternary structure, monomer. Binds 30S ribosomal subunits, but not 50S ribosomal subunits or 70S ribosomes.

Its subcellular location is the cytoplasm. Functionally, one of several proteins that assist in the late maturation steps of the functional core of the 30S ribosomal subunit. Associates with free 30S ribosomal subunits (but not with 30S subunits that are part of 70S ribosomes or polysomes). Required for efficient processing of 16S rRNA. May interact with the 5'-terminal helix region of 16S rRNA. The polypeptide is Ribosome-binding factor A (Lactobacillus delbrueckii subsp. bulgaricus (strain ATCC 11842 / DSM 20081 / BCRC 10696 / JCM 1002 / NBRC 13953 / NCIMB 11778 / NCTC 12712 / WDCM 00102 / Lb 14)).